The sequence spans 190 residues: Probable chorismate pyruvate-lyase (190 aa).

Substrate contacts are provided by R74, L112, and E173.

This sequence belongs to the UbiC family.

Its subcellular location is the cytoplasm. The catalysed reaction is chorismate = 4-hydroxybenzoate + pyruvate. The protein operates within cofactor biosynthesis; ubiquinone biosynthesis. Functionally, removes the pyruvyl group from chorismate, with concomitant aromatization of the ring, to provide 4-hydroxybenzoate (4HB) for the ubiquinone pathway. In Bordetella bronchiseptica (strain ATCC BAA-588 / NCTC 13252 / RB50) (Alcaligenes bronchisepticus), this protein is Probable chorismate pyruvate-lyase.